A 264-amino-acid polypeptide reads, in one-letter code: Tryptophan synthase alpha chain (264 aa).

Residues Glu49 and Asp60 each act as proton acceptor in the active site.

It belongs to the TrpA family. As to quaternary structure, tetramer of two alpha and two beta chains.

It carries out the reaction (1S,2R)-1-C-(indol-3-yl)glycerol 3-phosphate + L-serine = D-glyceraldehyde 3-phosphate + L-tryptophan + H2O. It functions in the pathway amino-acid biosynthesis; L-tryptophan biosynthesis; L-tryptophan from chorismate: step 5/5. Functionally, the alpha subunit is responsible for the aldol cleavage of indoleglycerol phosphate to indole and glyceraldehyde 3-phosphate. In Synechocystis sp. (strain ATCC 27184 / PCC 6803 / Kazusa), this protein is Tryptophan synthase alpha chain.